Consider the following 735-residue polypeptide: 1,4-alpha-glucan branching enzyme GlgB (735 aa).

The Nucleophile role is filled by Asp418. Glu471 functions as the Proton donor in the catalytic mechanism.

Belongs to the glycosyl hydrolase 13 family. GlgB subfamily. In terms of assembly, monomer.

The catalysed reaction is Transfers a segment of a (1-&gt;4)-alpha-D-glucan chain to a primary hydroxy group in a similar glucan chain.. Its pathway is glycan biosynthesis; glycogen biosynthesis. In terms of biological role, catalyzes the formation of the alpha-1,6-glucosidic linkages in glycogen by scission of a 1,4-alpha-linked oligosaccharide from growing alpha-1,4-glucan chains and the subsequent attachment of the oligosaccharide to the alpha-1,6 position. This Agrobacterium fabrum (strain C58 / ATCC 33970) (Agrobacterium tumefaciens (strain C58)) protein is 1,4-alpha-glucan branching enzyme GlgB.